We begin with the raw amino-acid sequence, 203 residues long: Suppressor/enhancer of lin-12 protein 9 (203 aa).

The signal sequence occupies residues 1–18; that stretch reads MNSLTWILAVLFVTPAAS. The Lumenal segment spans residues 19 to 170; sequence YFIHVDANEE…RNINENTNSR (152 aa). In terms of domain architecture, GOLD spans 28 to 110; that stretch reads EQCFFDRLTS…PKAVMFTVEI (83 aa). A helical membrane pass occupies residues 171–191; that stretch reads VVMWAAFEAFVLVGMTVGQIF. At 192–203 the chain is on the cytoplasmic side; that stretch reads YLKRFFEVRTMV.

The protein belongs to the EMP24/GP25L family.

The protein localises to the cytoplasmic vesicle membrane. The protein resides in the cytoplasmic vesicle. It is found in the COPI-coated vesicle membrane. Its subcellular location is the golgi apparatus membrane. Functionally, may have a role in the negative regulation of lin-12 and glp-1 transport to the cell surface. May also have a role in a quality control mechanism for endoplasmic reticulum-Golgi transport; the budding of coatomer-coated and other species of coated vesicles, could bind cargo molecules to collect them into budding vesicles. Involved in regulating the expression of proteasomal subunits such as rpt-3 in order to confer resistance to proteasomal dysfunction. This is Suppressor/enhancer of lin-12 protein 9 (sel-9) from Caenorhabditis elegans.